The sequence spans 321 residues: uncharacterized protein (321 aa).

Positions 1–12 (MSMFLKKQKKTK) are enriched in basic residues. Disordered stretches follow at residues 1 to 59 (MSMF…MRKT) and 71 to 289 (EDCT…GPED). Over residues 50 to 59 (DGIKETMRKT) the composition is skewed to basic and acidic residues. Acidic residues predominate over residues 99–115 (DDSDSESSEDGGEDDEE). Residues 156–175 (SDSSSSSSSSSDSESSSSSD) are compositionally biased toward low complexity. Residues 179–189 (DGDRSTPEPDI) are compositionally biased toward basic and acidic residues. A compositionally biased stretch (low complexity) spans 231–242 (EPSPLRAAAAAA).

This is an uncharacterized protein from Equus caballus (Horse).